A 266-amino-acid polypeptide reads, in one-letter code: Thiazole synthase (266 aa).

The Schiff-base intermediate with DXP role is filled by Lys-110. 1-deoxy-D-xylulose 5-phosphate-binding positions include Gly-171, 197–198, and 219–220; these read AG and AT.

The protein belongs to the ThiG family. As to quaternary structure, homotetramer. Forms heterodimers with either ThiH or ThiS.

The protein localises to the cytoplasm. The catalysed reaction is [ThiS sulfur-carrier protein]-C-terminal-Gly-aminoethanethioate + 2-iminoacetate + 1-deoxy-D-xylulose 5-phosphate = [ThiS sulfur-carrier protein]-C-terminal Gly-Gly + 2-[(2R,5Z)-2-carboxy-4-methylthiazol-5(2H)-ylidene]ethyl phosphate + 2 H2O + H(+). It participates in cofactor biosynthesis; thiamine diphosphate biosynthesis. In terms of biological role, catalyzes the rearrangement of 1-deoxy-D-xylulose 5-phosphate (DXP) to produce the thiazole phosphate moiety of thiamine. Sulfur is provided by the thiocarboxylate moiety of the carrier protein ThiS. In vitro, sulfur can be provided by H(2)S. This chain is Thiazole synthase, found in Thermobifida fusca (strain YX).